Reading from the N-terminus, the 92-residue chain is PqqA binding protein (92 aa).

Belongs to the PqqD family. Monomer. Interacts with PqqE.

It functions in the pathway cofactor biosynthesis; pyrroloquinoline quinone biosynthesis. Functionally, functions as a PqqA binding protein and presents PqqA to PqqE, in the pyrroloquinoline quinone (PQQ) biosynthetic pathway. This chain is PqqA binding protein, found in Xanthomonas campestris pv. campestris (strain B100).